Here is a 736-residue protein sequence, read N- to C-terminus: Poly(A) polymerase gamma (736 aa).

Lysine 2 is modified (N6-acetyllysine). Phosphoserine is present on residues serine 23 and serine 29. ATP contacts are provided by residues 99 to 101, threonine 108, 112 to 114, aspartate 166, lysine 227, tyrosine 236, and 245 to 246; these read FGS, DID, and GV. Residues aspartate 112, aspartate 114, and aspartate 166 each contribute to the Mg(2+) site. The tract at residues 506 to 564 is disordered; sequence KQSLSDVNRSSGGLQSKRLSLDSSCLDSSRDTDNGTPFNSPASKSDSPSVGETERNSAE. Polar residues predominate over residues 509-519; sequence LSDVNRSSGGL. Low complexity predominate over residues 521-532; that stretch reads SKRLSLDSSCLD. Serine 525 carries the post-translational modification Phosphoserine. A compositionally biased stretch (polar residues) spans 539–555; that stretch reads NGTPFNSPASKSDSPSV. 2 positions are modified to phosphoserine: serine 599 and serine 648. Threonine 654 is modified (phosphothreonine). Over residues 673-685 the composition is skewed to basic and acidic residues; sequence DPRTAEERKRKSV. The disordered stretch occupies residues 673-720; the sequence is DPRTAEERKRKSVDAIGGESMPIPTIDTSRKKRLPSKELPDSSSPVPA. A phosphoserine mark is found at serine 684 and serine 708.

This sequence belongs to the poly(A) polymerase family. Requires Mg(2+) as cofactor. The cofactor is Mn(2+). As to expression, expressed predominantly in testis, and weakly in other tissues. Overexpressed in several tumors.

The protein localises to the nucleus. It catalyses the reaction RNA(n) + ATP = RNA(n)-3'-adenine ribonucleotide + diphosphate. Functionally, responsible for the post-transcriptional adenylation of the 3'-terminal of mRNA precursors and several small RNAs including signal recognition particle (SRP) RNA, nuclear 7SK RNA, U2 small nuclear RNA, and ribosomal 5S RNA. The sequence is that of Poly(A) polymerase gamma from Homo sapiens (Human).